The following is a 486-amino-acid chain: Recombining binding protein suppressor of hairless (486 aa).

DNA-binding regions lie at residues 43–53 and 151–156; these read QKSYGNEKRFF and SKPSKK. Position 161 is an N6-acetyllysine (Lys-161). The tract at residues 178–183 is DNA-binding; the sequence is RLRSQT. Residues 341 to 431 form the IPT/TIG domain; sequence PVVESLQLNG…YSTSLTFTYT (91 aa). Residues 451–467 show a composition bias toward polar residues; sequence SSQVPPNESNTNSEGSY. A disordered region spans residues 451 to 486; the sequence is SSQVPPNESNTNSEGSYTNASTNSTSVTSSTATVVS. Positions 468 to 486 are enriched in low complexity; that stretch reads TNASTNSTSVTSSTATVVS.

It belongs to the Su(H) family. Interacts with activated NOTCH1, NOTCH2 or NOTCH3. Interacts with MINT/SHARP. This interaction may mediate the recruitment of large corepressor complexes containing proteins such as HDAC1, HDAC2, NCOR2, SAP30, FHL1/KYOT2 and CIR1. Interacts with EP300, MAML1 and PTF1A. Interacts with RITA1, leading to nuclear export, prevent the interaction between RBPJ and NICD product and subsequent down-regulation of the Notch signaling pathway. Interacts with SNW1. Interacts with CHCHD2 and CXXC5. Interacts with BEND6 (via BEN domain). Interacts with NKAPL. Interacts with ZMIZ1. Interacts with RBM15. Interacts with L3MBTL3 and KDM1A; the interaction with KDM1A is weaker in the absence of L3MBTL3 and the interaction with L3MBTL3 is impaired by Notch-derived peptides containing the intracellular domain (NICD).

It localises to the nucleus. It is found in the cytoplasm. In terms of biological role, transcriptional regulator that plays a central role in Notch signaling, a signaling pathway involved in cell-cell communication that regulates a broad spectrum of cell-fate determinations. Acts as a transcriptional repressor when it is not associated with Notch proteins. When associated with some NICD product of Notch proteins (Notch intracellular domain), it acts as a transcriptional activator that activates transcription of Notch target genes. Probably represses or activates transcription via the recruitment of chromatin remodeling complexes containing histone deacetylase or histone acetylase proteins, respectively. Specifically binds to the immunoglobulin kappa-type J segment recombination signal sequence. Binds specifically to methylated DNA. Binds to the oxygen responsive element of COX4I2 and activates its transcription under hypoxia conditions (4% oxygen). Negatively regulates the phagocyte oxidative burst in response to bacterial infection by repressing transcription of NADPH oxidase subunits. The polypeptide is Recombining binding protein suppressor of hairless (RBPJ) (Pongo abelii (Sumatran orangutan)).